A 1921-amino-acid polypeptide reads, in one-letter code: Disks large homolog 5 (1921 aa).

A CARD domain is found at 1–90; it reads MEPQRRELLA…HLLPILYLNG (90 aa). A disordered region spans residues 116-143; it reads ESSSSLSSVGTTGKAPSPPPLLTEQQAN. Positions 139–601 form a coiled coil; sequence EQQANDTVEN…KEARFRQLMA (463 aa). Phosphoserine occurs at positions 264 and 295. 2 consecutive PDZ domains span residues 620–710 and 705–796; these read VVEF…RRRK and VVRR…LKVF. Positions 857-898 are disordered; the sequence is ELGHSGGSSSFLHKPFSGSSSPVSPQACPSTSERSLNSFRSD. Residues 873-898 are compositionally biased toward polar residues; that stretch reads SGSSSPVSPQACPSTSERSLNSFRSD. S900 is subject to Phosphoserine. The disordered stretch occupies residues 930-1121; it reads EVPLDKIDPE…RPKSAPSFRP (192 aa). The residue at position 984 (T984) is a Phosphothreonine. Residue S1000 is modified to Phosphoserine. A Phosphothreonine modification is found at T1011. Basic and acidic residues predominate over residues 1017-1030; the sequence is RRSDSIKFQHRLET. S1021 bears the Phosphoserine mark. Positions 1045-1055 are enriched in pro residues; it reads TSPPSAPPPSM. T1183 bears the Phosphothreonine mark. 3 disordered regions span residues 1204–1227, 1243–1266, and 1280–1343; these read VLPCGSPPVPRDAGSQSLSPSVQH, YSEMRASQGSNSLPSSARLGSSSN, and PRYP…KDRP. Position 1209 is a phosphoserine (S1209). Residues 1217–1227 show a composition bias toward polar residues; it reads GSQSLSPSVQH. Positions 1252–1266 are enriched in low complexity; sequence SNSLPSSARLGSSSN. S1263 carries the post-translational modification Phosphoserine. Over residues 1292-1324 the composition is skewed to polar residues; that stretch reads GSLSHSECSTPPRSPLNIDTLSSCSQPQTTAST. S1334 carries the phosphoserine modification. A PDZ 3 domain is found at 1350–1429; the sequence is HVKVQKGSEP…TITILAQYNP (80 aa). Polar residues-rich tracts occupy residues 1434 to 1443, 1450 to 1460, and 1483 to 1495; these read LNSHSRSSSH, PHSTLQGSSAG, and AKQSASSTRSVGD. The tract at residues 1434-1501 is disordered; that stretch reads LNSHSRSSSH…SVGDTTKKTP (68 aa). Residues 1504-1585 enclose the PDZ 4 domain; that stretch reads RIVFIKKSQL…SLRLKVQYRH (82 aa). One can recognise an SH3 domain in the interval 1596–1664; the sequence is GDSFYIRALY…PSKYVMDQEF (69 aa). At S1669 the chain carries Phosphoserine. In terms of domain architecture, Guanylate kinase-like spans 1724-1907; sequence DSVSLAYQRV…ICTQILAMVS (184 aa).

Belongs to the MAGUK family. As to quaternary structure, interacts with MPP1. Interacts with CTNNB1 and with the third SH3 domain of SORBS3 to form a ternary complex. Interacts (via coiled-coil domain) with MARK3. Interacts (via PDZ domain 3) with STK3/MST2 and STK4/MST1. Interacts with SCRIB. Interacts with CTNB1. Interacts with SMO and (via PDZ4 or guanylate kinase-like domain) with KIF7. As to expression, brain (at protein level).

It localises to the cell junction. Its subcellular location is the cell membrane. The protein resides in the postsynaptic density. The protein localises to the cytoplasm. It is found in the cytoskeleton. It localises to the cilium basal body. In terms of biological role, acts as a regulator of the Hippo signaling pathway. Negatively regulates the Hippo signaling pathway by mediating the interaction of MARK3 with STK3/4, bringing them together to promote MARK3-dependent hyperphosphorylation and inactivation of STK3 kinase activity toward LATS1. Positively regulates the Hippo signaling by mediating the interaction of SCRIB with STK4/MST1 and LATS1 which is important for the activation of the Hippo signaling pathway. Involved in regulating cell proliferation, maintenance of epithelial polarity, epithelial-mesenchymal transition (EMT), cell migration and invasion. Plays an important role in dendritic spine formation and synaptogenesis in cortical neurons; regulates synaptogenesis by enhancing the cell surface localization of N-cadherin. Acts as a positive regulator of hedgehog (Hh) signaling pathway. Plays a critical role in the early point of the SMO activity cycle by interacting with SMO at the ciliary base to induce the accumulation of KIF7 and GLI2 at the ciliary tip for GLI2 activation. The polypeptide is Disks large homolog 5 (Dlg5) (Mus musculus (Mouse)).